A 185-amino-acid polypeptide reads, in one-letter code: Ribosome-recycling factor (185 aa).

Belongs to the RRF family.

It is found in the cytoplasm. Functionally, responsible for the release of ribosomes from messenger RNA at the termination of protein biosynthesis. May increase the efficiency of translation by recycling ribosomes from one round of translation to another. The sequence is that of Ribosome-recycling factor from Streptococcus uberis (strain ATCC BAA-854 / 0140J).